We begin with the raw amino-acid sequence, 138 residues long: MAPKAAEKKPAEKKPAGKAPAEKLPKAEKKISKDAGGSEKKKKKSKKSVETYKIYIFKVLKQVHPDVGISGKAMGIMNSFINDIFEKLAQESSKLARYNKKPTITSREIQTAVRLVLPGELAKHAVSEGTKAVTKFTS.

Residues 1–39 (MAPKAAEKKPAEKKPAGKAPAEKLPKAEKKISKDAGGSE) are compositionally biased toward basic and acidic residues. The disordered stretch occupies residues 1–48 (MAPKAAEKKPAEKKPAGKAPAEKLPKAEKKISKDAGGSEKKKKKSKKS). A2 is modified (n,N,N-trimethylalanine; alternate). Residue A2 is modified to N,N-dimethylalanine; alternate. A2 bears the N-methylalanine; alternate mark. K4 carries the post-translational modification N6-methyllysine. N6-acetyllysine occurs at positions 8 and 13. An N6,N6-dimethyllysine modification is found at K14. An N6-acetyllysine mark is found at K18, K23, K29, and K30. A Glycyl lysine isopeptide (Lys-Gly) (interchain with G-Cter in ubiquitin) cross-link involves residue K135.

This sequence belongs to the histone H2B family. In terms of assembly, the nucleosome is a histone octamer containing two molecules each of H2A, H2B, H3 and H4 assembled in one H3-H4 heterotetramer and two H2A-H2B heterodimers. The octamer wraps approximately 147 bp of DNA. In terms of processing, can be acetylated to form H2BK6ac, H2BK33ac and H2BK34ac. Monoubiquitinated by BRE1 to form H2BK143ub1 and deubiquitinated by UBP26. Required for heterochromatic histone H3 di- and trimethylation at H3K4me. May give a specific tag for epigenetic transcriptional activation.

It localises to the nucleus. The protein resides in the chromosome. Its function is as follows. Core component of nucleosome. Nucleosomes wrap and compact DNA into chromatin, limiting DNA accessibility to the cellular machineries which require DNA as a template. Histones thereby play a central role in transcription regulation, DNA repair, DNA replication and chromosomal stability. DNA accessibility is regulated via a complex set of post-translational modifications of histones, also called histone code, and nucleosome remodeling. This chain is Histone H2B.4, found in Arabidopsis thaliana (Mouse-ear cress).